Here is a 420-residue protein sequence, read N- to C-terminus: Napsin-A (420 aa).

The N-terminal stretch at 1–25 is a signal peptide; sequence MSPPPLLQPLLLLLPLLNVEPSGAT. A propeptide spans 26-63 (activation peptide); it reads LIRIPLHRVQPGRRILNLLRGWREPAELPKLGAPSPGD. Positions 78 to 399 constitute a Peptidase A1 domain; it reads YFGEIGLGTP…MKSSARVGLA (322 aa). Residue Asn90 is glycosylated (N-linked (GlcNAc...) asparagine). Asp96 is an active-site residue. Residues Cys109 and Cys116 are joined by a disulfide bond. An N-linked (GlcNAc...) asparagine glycan is attached at Asn133. A disulfide bridge connects residues Cys274 and Cys278. Residue Asp283 is part of the active site. An intrachain disulfide couples Cys317 to Cys354. An N-linked (GlcNAc...) asparagine glycan is attached at Asn336.

This sequence belongs to the peptidase A1 family. In terms of tissue distribution, expressed predominantly in adult lung (type II pneumocytes) and kidney and in fetal lung. Low levels in adult spleen and very low levels in peripheral blood leukocytes.

The protein localises to the secreted. Functionally, may be involved in processing of pneumocyte surfactant precursors. This is Napsin-A (NAPSA) from Homo sapiens (Human).